We begin with the raw amino-acid sequence, 124 residues long: Small ribosomal subunit protein uS12 (124 aa).

Aspartate 89 is subject to 3-methylthioaspartic acid. The segment at 104–124 (ALGVEDRKRGRSKYGAKRPKA) is disordered. Residues 112-124 (RGRSKYGAKRPKA) show a composition bias toward basic residues.

It belongs to the universal ribosomal protein uS12 family. In terms of assembly, part of the 30S ribosomal subunit. Contacts proteins S8 and S17. May interact with IF1 in the 30S initiation complex.

Its function is as follows. With S4 and S5 plays an important role in translational accuracy. In terms of biological role, interacts with and stabilizes bases of the 16S rRNA that are involved in tRNA selection in the A site and with the mRNA backbone. Located at the interface of the 30S and 50S subunits, it traverses the body of the 30S subunit contacting proteins on the other side and probably holding the rRNA structure together. The combined cluster of proteins S8, S12 and S17 appears to hold together the shoulder and platform of the 30S subunit. This Treponema denticola (strain ATCC 35405 / DSM 14222 / CIP 103919 / JCM 8153 / KCTC 15104) protein is Small ribosomal subunit protein uS12.